Reading from the N-terminus, the 89-residue chain is Small ribosomal subunit protein uS17 (89 aa).

The protein belongs to the universal ribosomal protein uS17 family. Part of the 30S ribosomal subunit.

Its function is as follows. One of the primary rRNA binding proteins, it binds specifically to the 5'-end of 16S ribosomal RNA. In Xylella fastidiosa (strain 9a5c), this protein is Small ribosomal subunit protein uS17.